A 1134-amino-acid chain; its full sequence is Phytochrome 1 (1134 aa).

In terms of domain architecture, GAF spans 219-401 (DIGLLCDTVV…VFGLQLNMEA (183 aa)). Cysteine 324 contacts phytochromobilin. The region spanning 616–687 (VANEMVRLIE…RLLYLALQGD (72 aa)) is the PAS 1 domain. The region spanning 690 to 746 (QNVELKLKTFGGQKDKEAVILVVNACASRDVSDNVVGVCFVGQDVTGQKVVMDKFTR) is the PAC domain. A PAS 2 domain is found at 750 to 821 (DYKAIVQNPN…KGQDAVTKFM (72 aa)). Residues 901-1121 (YIRQEIKNPL…LVSLELPLAQ (221 aa)) enclose the Histidine kinase domain.

This sequence belongs to the phytochrome family. Homodimer. Post-translationally, contains one covalently linked phytochromobilin chromophore.

Its function is as follows. Regulatory photoreceptor which exists in two forms that are reversibly interconvertible by light: the Pr form that absorbs maximally in the red region of the spectrum and the Pfr form that absorbs maximally in the far-red region. Photoconversion of Pr to Pfr induces an array of morphogenic responses, whereas reconversion of Pfr to Pr cancels the induction of those responses. Pfr controls the expression of a number of nuclear genes including those encoding the small subunit of ribulose-bisphosphate carboxylase, chlorophyll A/B binding protein, protochlorophyllide reductase, rRNA, etc. It also controls the expression of its own gene(s) in a negative feedback fashion. In Selaginella martensii (Martens's spike moss), this protein is Phytochrome 1 (PHY1).